We begin with the raw amino-acid sequence, 263 residues long: Antigen 10-3 (263 aa).

The N-terminal stretch at 1–21 is a signal peptide; the sequence is MNIYLIGILCIVGLIISQGST. Positions 70-207 are disordered; it reads GNKKDKQPTQ…QINDGTSDKP (138 aa). Over residues 78 to 90 the composition is skewed to low complexity; sequence TQKTTPKPTTPKQ. 5 tandem repeats follow at residues 81–107, 108–134, 135–161, 162–188, and 189–206. Positions 81–189 are 5 X 27 AA tandem repeats; that stretch reads TTPKPTTPKQ…TSDTHTIKRT (109 aa). Basic and acidic residues-rich tracts occupy residues 95 to 104, 122 to 131, 149 to 158, and 176 to 185; these read TSDKTSDTHT.

In Schistosoma mansoni (Blood fluke), this protein is Antigen 10-3.